Consider the following 138-residue polypeptide: Protein X (138 aa).

The segment at 20–43 (PLRGQPSGPSVSGTSAGSPSSAAS) is disordered. Over residues 25 to 43 (PSGPSVSGTSAGSPSSAAS) the composition is skewed to low complexity. The mitochondrial targeting sequence stretch occupies residues 68–113 (PCCLGFTCADLRTMDSTVNFVPWHAKRQLGMMQKDFWTAYIRDQLL).

This sequence belongs to the orthohepadnavirus protein X family. May form homodimer. May interact with host CEBPA, CFLAR, CREB1, DDB1, E4F1, HBXIP, HSPD1/HSP60, NFKBIA, POLR2E and SMAD4. Interacts with host SMC5-SMC6 complex and induces its degradation. Interacts with host TRPC4AP; leading to prevent ubiquitination of TRPC4AP. Interacts with host PLSCR1; this interaction promotes ubiquitination and degradation of HBx and impairs HBx-mediated cell proliferation. In terms of processing, a fraction may be phosphorylated in insect cells and HepG2 cells, a human hepatoblastoma cell line. Phosphorylated in vitro by host protein kinase C or mitogen-activated protein kinase. N-acetylated in insect cells.

Its subcellular location is the host cytoplasm. It localises to the host nucleus. The protein resides in the host mitochondrion. Multifunctional protein that plays a role in silencing host antiviral defenses and promoting viral transcription. Does not seem to be essential for HBV infection. May be directly involved in development of cirrhosis and liver cancer (hepatocellular carcinoma). Most of cytosolic activities involve modulation of cytosolic calcium. The effect on apoptosis is controversial depending on the cell types in which the studies have been conducted. May induce apoptosis by localizing in mitochondria and causing loss of mitochondrial membrane potential. May also modulate apoptosis by binding host CFLAR, a key regulator of the death-inducing signaling complex (DISC). Promotes viral transcription by using the host E3 ubiquitin ligase DDB1 to target the SMC5-SMC6 complex to proteasomal degradation. This host complex would otherwise bind to viral episomal DNA, and prevents its transcription. Moderately stimulates transcription of many different viral and cellular transcription elements. Promoters and enhancers stimulated by HBx contain DNA binding sites for NF-kappa-B, AP-1, AP-2, c-EBP, ATF/CREB, or the calcium-activated factor NF-AT. This Ground squirrel hepatitis virus (strain 27) (GSHV) protein is Protein X.